Here is a 406-residue protein sequence, read N- to C-terminus: Argininosuccinate synthase (406 aa).

8-16 serves as a coordination point for ATP; the sequence is AYSGGLDTT. 2 residues coordinate L-citrulline: tyrosine 86 and serine 91. An ATP-binding site is contributed by glycine 116. Residues threonine 118, asparagine 122, and aspartate 123 each coordinate L-aspartate. An L-citrulline-binding site is contributed by asparagine 122. Arginine 126, serine 175, serine 184, glutamate 261, and tyrosine 273 together coordinate L-citrulline.

Belongs to the argininosuccinate synthase family. Type 1 subfamily. In terms of assembly, homotetramer.

The protein resides in the cytoplasm. The enzyme catalyses L-citrulline + L-aspartate + ATP = 2-(N(omega)-L-arginino)succinate + AMP + diphosphate + H(+). It functions in the pathway amino-acid biosynthesis; L-arginine biosynthesis; L-arginine from L-ornithine and carbamoyl phosphate: step 2/3. This Brachyspira hyodysenteriae (strain ATCC 49526 / WA1) protein is Argininosuccinate synthase.